The chain runs to 259 residues: Probable WRKY transcription factor 65 (259 aa).

Positions 1-17 are enriched in basic and acidic residues; that stretch reads MKRGLDMARSYNDHESS. Disordered regions lie at residues 1–101 and 126–165; these read MKRG…RCSS and TSEH…EEED. The span at 18–31 shows a compositional bias: polar residues; sequence QETGPESPNSSTFN. Residues 47 to 69 are compositionally biased toward basic and acidic residues; it reads RSVEKRVVNVPMKEMEGSRHKGD. The segment at residues 68–134 is a DNA-binding region (WRKY); the sequence is GDTTPPSDSW…YTSEHNHPWP (67 aa). Residues 154–165 are compositionally biased toward acidic residues; sequence EPEVEPEAEEED.

It is found in the nucleus. Transcription factor. Interacts specifically with the W box (5'-(T)TGAC[CT]-3'), a frequently occurring elicitor-responsive cis-acting element. The polypeptide is Probable WRKY transcription factor 65 (WRKY65) (Arabidopsis thaliana (Mouse-ear cress)).